Here is a 427-residue protein sequence, read N- to C-terminus: MNFYVDVLGCPKNEADCALLKAYLEKKGNNIVNTIEDADAVVIDTCGFILEAKKESIEEILTYLELKKERDLKVYVTGCLVQRYGEELKKEIPEVDGWFGILPPEKIAENIGKESIIPKNPEPVYEFGGRVDEKQYAYVKISDGCDRACSFCTIPLFKGSFKSRKIDDIVKEVEYLILSGKKEIILVAQDTTGYGIDLYGKQMLPELLKRINDIPGDFWIRVMYMHPDHITDEIIEAFSYDKVLKYFDIPVQHGSDKVLKLMNRTKKSEHILKLVEKIRKRYEDAVLRTSIIVGFPGETDEDFEELLDFIKMVRFERLGAFIYSDEEEAPSYHFEGKVPEIVAQERLDILMEEQSKISFEINEKMVGKTFKVLFDEEEEGVLIARSYMDAPEIDGNIFVPGKFEEGFFKVKVTSADVYDLEGKIVEE.

One can recognise an MTTase N-terminal domain in the interval 1–116; sequence MNFYVDVLGC…IAENIGKESI (116 aa). Residues C10, C46, C79, C145, C149, and C152 each contribute to the [4Fe-4S] cluster site. The 230-residue stretch at 131-360 folds into the Radical SAM core domain; sequence VDEKQYAYVK…MEEQSKISFE (230 aa). The 64-residue stretch at 363–426 folds into the TRAM domain; sequence EKMVGKTFKV…VYDLEGKIVE (64 aa).

The protein belongs to the methylthiotransferase family. RimO subfamily. The cofactor is [4Fe-4S] cluster.

Its subcellular location is the cytoplasm. It catalyses the reaction L-aspartate(89)-[ribosomal protein uS12]-hydrogen + (sulfur carrier)-SH + AH2 + 2 S-adenosyl-L-methionine = 3-methylsulfanyl-L-aspartate(89)-[ribosomal protein uS12]-hydrogen + (sulfur carrier)-H + 5'-deoxyadenosine + L-methionine + A + S-adenosyl-L-homocysteine + 2 H(+). Functionally, catalyzes the methylthiolation of an aspartic acid residue of ribosomal protein uS12. This is Ribosomal protein uS12 methylthiotransferase RimO from Thermosipho africanus (strain TCF52B).